A 300-amino-acid chain; its full sequence is Erythroblast NAD(P)(+)--arginine ADP-ribosyltransferase (300 aa).

Residues 1-22 form the signal peptide; that stretch reads MEEPLLHAILGLVLLLSTRTDA. Disulfide bonds link C51/C260 and C159/C208. The 187-residue stretch at 70–256 folds into the TR mART core domain; that stretch reads ETFAEGWRSA…IQLRSQGKSS (187 aa). Positions 107, 164, and 183 each coordinate NAD(+). Residue R164 is part of the active site. Residue S186 is part of the active site. An NAD(+)-binding site is contributed by S217. E224 is an active-site residue. The interval 276–300 is disordered; sequence SADKSSPLPRSPWPGWAPLAAPHSH.

The protein belongs to the Arg-specific ADP-ribosyltransferase family.

The enzyme catalyses L-arginyl-[protein] + NAD(+) = N(omega)-(ADP-D-ribosyl)-L-arginyl-[protein] + nicotinamide + H(+). In Gallus gallus (Chicken), this protein is Erythroblast NAD(P)(+)--arginine ADP-ribosyltransferase (MADPRT).